The chain runs to 375 residues: Queuine tRNA-ribosyltransferase (375 aa).

Asp-90 acts as the Proton acceptor in catalysis. Substrate is bound by residues 90-94 (DSGGF), Asp-144, Gln-190, and Gly-217. Residues 248 to 254 (GIGTPHY) form an RNA binding region. Residue Asp-267 is the Nucleophile of the active site. The tract at residues 272 to 276 (TRIAR) is RNA binding; important for wobble base 34 recognition. Positions 305, 307, 310, and 336 each coordinate Zn(2+).

Belongs to the queuine tRNA-ribosyltransferase family. Homodimer. Within each dimer, one monomer is responsible for RNA recognition and catalysis, while the other monomer binds to the replacement base PreQ1. Zn(2+) serves as cofactor.

It catalyses the reaction 7-aminomethyl-7-carbaguanine + guanosine(34) in tRNA = 7-aminomethyl-7-carbaguanosine(34) in tRNA + guanine. It functions in the pathway tRNA modification; tRNA-queuosine biosynthesis. In terms of biological role, catalyzes the base-exchange of a guanine (G) residue with the queuine precursor 7-aminomethyl-7-deazaguanine (PreQ1) at position 34 (anticodon wobble position) in tRNAs with GU(N) anticodons (tRNA-Asp, -Asn, -His and -Tyr). Catalysis occurs through a double-displacement mechanism. The nucleophile active site attacks the C1' of nucleotide 34 to detach the guanine base from the RNA, forming a covalent enzyme-RNA intermediate. The proton acceptor active site deprotonates the incoming PreQ1, allowing a nucleophilic attack on the C1' of the ribose to form the product. After dissociation, two additional enzymatic reactions on the tRNA convert PreQ1 to queuine (Q), resulting in the hypermodified nucleoside queuosine (7-(((4,5-cis-dihydroxy-2-cyclopenten-1-yl)amino)methyl)-7-deazaguanosine). This is Queuine tRNA-ribosyltransferase from Borrelia hermsii (strain HS1 / DAH).